Here is a 542-residue protein sequence, read N- to C-terminus: Formate--tetrahydrofolate ligase (542 aa).

An ATP-binding site is contributed by 53–60 (TPAGEGKT).

The protein belongs to the formate--tetrahydrofolate ligase family.

The enzyme catalyses (6S)-5,6,7,8-tetrahydrofolate + formate + ATP = (6R)-10-formyltetrahydrofolate + ADP + phosphate. Its pathway is one-carbon metabolism; tetrahydrofolate interconversion. The chain is Formate--tetrahydrofolate ligase from Thermotoga maritima (strain ATCC 43589 / DSM 3109 / JCM 10099 / NBRC 100826 / MSB8).